An 88-amino-acid polypeptide reads, in one-letter code: Cell division topological specificity factor (88 aa).

This sequence belongs to the MinE family.

Its function is as follows. Prevents the cell division inhibition by proteins MinC and MinD at internal division sites while permitting inhibition at polar sites. This ensures cell division at the proper site by restricting the formation of a division septum at the midpoint of the long axis of the cell. This Clostridium kluyveri (strain ATCC 8527 / DSM 555 / NBRC 12016 / NCIMB 10680 / K1) protein is Cell division topological specificity factor.